The following is a 151-amino-acid chain: Deoxyuridine 5'-triphosphate nucleotidohydrolase (151 aa).

Residues 70-72, asparagine 83, 87-89, and methionine 97 contribute to the substrate site; these read RSG and LID.

Belongs to the dUTPase family. Mg(2+) is required as a cofactor.

The enzyme catalyses dUTP + H2O = dUMP + diphosphate + H(+). The protein operates within pyrimidine metabolism; dUMP biosynthesis; dUMP from dCTP (dUTP route): step 2/2. In terms of biological role, this enzyme is involved in nucleotide metabolism: it produces dUMP, the immediate precursor of thymidine nucleotides and it decreases the intracellular concentration of dUTP so that uracil cannot be incorporated into DNA. This Actinobacillus succinogenes (strain ATCC 55618 / DSM 22257 / CCUG 43843 / 130Z) protein is Deoxyuridine 5'-triphosphate nucleotidohydrolase.